A 278-amino-acid polypeptide reads, in one-letter code: Phosphonates import ATP-binding protein PhnC 1 (278 aa).

The ABC transporter domain maps to 5 to 253; that stretch reads IRVDSLNKTF…FLNELYGAEG (249 aa). 37–44 serves as a coordination point for ATP; sequence GASGSGKS.

This sequence belongs to the ABC transporter superfamily. Phosphonates importer (TC 3.A.1.9.1) family. The complex is composed of two ATP-binding proteins (PhnC), two transmembrane proteins (PhnE) and a solute-binding protein (PhnD).

It localises to the cell inner membrane. The catalysed reaction is phosphonate(out) + ATP + H2O = phosphonate(in) + ADP + phosphate + H(+). In terms of biological role, part of the ABC transporter complex PhnCDE involved in phosphonates import. Responsible for energy coupling to the transport system. The protein is Phosphonates import ATP-binding protein PhnC 1 of Pseudomonas aeruginosa (strain UCBPP-PA14).